A 98-amino-acid polypeptide reads, in one-letter code: NADH-ubiquinone oxidoreductase chain 4L (98 aa).

A run of 3 helical transmembrane segments spans residues 2–22, 29–49, and 61–81; these read PSISINITLAFTAALLGMLMF, SLLCLEGMMLSMFILSTLIIL, and ILLLVFAACEAAIGLALLVMV.

This sequence belongs to the complex I subunit 4L family. In terms of assembly, core subunit of respiratory chain NADH dehydrogenase (Complex I) which is composed of 45 different subunits.

Its subcellular location is the mitochondrion inner membrane. The catalysed reaction is a ubiquinone + NADH + 5 H(+)(in) = a ubiquinol + NAD(+) + 4 H(+)(out). Its function is as follows. Core subunit of the mitochondrial membrane respiratory chain NADH dehydrogenase (Complex I) which catalyzes electron transfer from NADH through the respiratory chain, using ubiquinone as an electron acceptor. Part of the enzyme membrane arm which is embedded in the lipid bilayer and involved in proton translocation. This Microcebus griseorufus (Gray-brown mouse lemur) protein is NADH-ubiquinone oxidoreductase chain 4L (MT-ND4L).